The chain runs to 101 residues: Stefin-C (101 aa).

Position 1 is an N-acetylmethionine (Met1). The short motif at 49–53 is the Secondary area of contact element; it reads QVVAG.

The protein belongs to the cystatin family.

The protein localises to the cytoplasm. Functionally, strong inhibitor of papain and cathepsin L but poor inhibitor of cathepsin B. The sequence is that of Stefin-C from Bos taurus (Bovine).